We begin with the raw amino-acid sequence, 825 residues long: Ubiquitin carboxyl-terminal hydrolase 16 (825 aa).

The interval 1 to 20 is disordered; that stretch reads MGKKRTKGRSAPDTVASESA. The UBP-type zinc finger occupies 22-141; the sequence is PVCRHLRKGL…QVVDYVRKQA (120 aa). The Zn(2+) site is built by C24, H26, C48, C51, C73, C76, C81, H89, H93, H102, C115, and C118. A Glycyl lysine isopeptide (Lys-Gly) (interchain with G-Cter in SUMO2) cross-link involves residue K139. Positions 164-180 are enriched in basic and acidic residues; that stretch reads EKESKNEQEREKSENLA. Positions 164-184 are disordered; the sequence is EKESKNEQEREKSENLAKETI. At S188 the chain carries Phosphoserine. The region spanning 195–824 is the USP domain; sequence KGLSNLGNTC…QAYLLFYERI (630 aa). The active-site Nucleophile is the C204. Residues 393 to 407 are compositionally biased toward basic and acidic residues; it reads SGKKSINDKNVKMTM. The tract at residues 393–456 is disordered; the sequence is SGKKSINDKN…KQAKNQRRQQ (64 aa). Residues 408–419 show a composition bias toward acidic residues; the sequence is EEEDKDSEEEKD. Phosphoserine is present on S414. Positions 436 to 456 are enriched in basic residues; sequence HLQKKAKKQAKKQAKNQRRQQ. Phosphoserine is present on residues S520 and S531. The Proton acceptor role is filled by H759.

Belongs to the peptidase C19 family. USP16 subfamily. As to quaternary structure, homotetramer. Associates with late pre-40S ribosomes. Interacts with CEP78; promoting deubiquitination of tektins. In terms of processing, phosphorylated at the onset of mitosis and dephosphorylated during the metaphase/anaphase transition. Phosphorylation by AURKB enhances the deubiquitinase activity.

The protein resides in the nucleus. It is found in the cytoplasm. The enzyme catalyses Thiol-dependent hydrolysis of ester, thioester, amide, peptide and isopeptide bonds formed by the C-terminal Gly of ubiquitin (a 76-residue protein attached to proteins as an intracellular targeting signal).. Functionally, specifically deubiquitinates 'Lys-120' of histone H2A (H2AK119Ub), a specific tag for epigenetic transcriptional repression, thereby acting as a coactivator. Deubiquitination of histone H2A is a prerequisite for subsequent phosphorylation at 'Ser-11' of histone H3 (H3S10ph), and is required for chromosome segregation when cells enter into mitosis. In resting B- and T-lymphocytes, phosphorylation by AURKB leads to enhance its activity, thereby maintaining transcription in resting lymphocytes. Regulates Hox gene expression via histone H2A deubiquitination. Prefers nucleosomal substrates. Does not deubiquitinate histone H2B. Also deubiquitinates non-histone proteins, such as ribosomal protein RPS27A: deubiquitination of monoubiquitinated RPS27A promotes maturation of the 40S ribosomal subunit. Also mediates deubiquitination of tektin proteins (TEKT1, TEKT2, TEK3, TEKT4 and TEKT5), promoting their stability. This is Ubiquitin carboxyl-terminal hydrolase 16 (Usp16) from Mus musculus (Mouse).